Here is a 328-residue protein sequence, read N- to C-terminus: Neuropeptides B/W receptor type 1 (328 aa).

Over 1-37 (MDNASFSEPWPANASGPDPALSCSNASTLAPLPAPLA) the chain is Extracellular. N-linked (GlcNAc...) asparagine glycans are attached at residues N3, N13, and N25. A helical membrane pass occupies residues 38–61 (VAVPVVYAVICAVGLAGNSAVLYV). Residues 62–72 (LLRAPRMKTVT) are Cytoplasmic-facing. Residues 73-97 (NLFILNLAIADELFTLVLPINIADF) form a helical membrane-spanning segment. Residues 98-112 (LLRQWPFGELMCKLI) lie on the Extracellular side of the membrane. Cysteines 109 and 188 form a disulfide. Residues 113–132 (VAIDQYNTFSSLYFLTVMSA) traverse the membrane as a helical segment. Residues 133 to 157 (DRYLVVLATAESRRVAGRTYSAARA) lie on the Cytoplasmic side of the membrane. Residues 158 to 177 (VSLAVWGIVTLVVLPFAVFA) form a helical membrane-spanning segment. Over 178-202 (RLDDEQGRRQCVLVFPQPEAFWWRA) the chain is Extracellular. Residues 203 to 224 (SRLYTLVLGFAIPVSTICVLYT) form a helical membrane-spanning segment. Residues 225–248 (TLLCRLHAMRLDSHAKALERAKKR) lie on the Cytoplasmic side of the membrane. Residues 249-273 (VTFLVVAILAVCLLCWTPYHLSTVV) traverse the membrane as a helical segment. Topologically, residues 274–283 (ALTTDLPQTP) are extracellular. Residues 284-298 (LVIAISYFITSLSYA) form a helical membrane-spanning segment. Over 299 to 328 (NSCLNPFLYAFLDASFRRNLRQLITCRAAA) the chain is Cytoplasmic.

Belongs to the G-protein coupled receptor 1 family. In terms of tissue distribution, found in cerebellum and frontal cortex. Detected at high levels in hippocampus, amygdala and trachea; at moderate levels in fetal brain, pituitary gland and prostate. Not in caudate, accumbens, kidney or liver. Also detected at high levels in lung carcinoma.

It localises to the cell membrane. In terms of biological role, interacts specifically with a number of opioid ligands. Receptor for neuropeptides B and W, which may be involved in neuroendocrine system regulation, food intake and the organization of other signals. Has a higher affinity for neuropeptide B. The sequence is that of Neuropeptides B/W receptor type 1 (NPBWR1) from Homo sapiens (Human).